Here is a 372-residue protein sequence, read N- to C-terminus: Flagellar P-ring protein (372 aa).

Positions 1–26 are cleaved as a signal peptide; sequence MNLSSLPFRLLAAAVALCAIAAPASA.

The protein belongs to the FlgI family. As to quaternary structure, the basal body constitutes a major portion of the flagellar organelle and consists of four rings (L,P,S, and M) mounted on a central rod.

It localises to the periplasm. It is found in the bacterial flagellum basal body. Assembles around the rod to form the L-ring and probably protects the motor/basal body from shearing forces during rotation. The chain is Flagellar P-ring protein from Xanthomonas axonopodis pv. citri (strain 306).